A 75-amino-acid chain; its full sequence is UPF0352 protein VSAL_I1058 (75 aa).

Belongs to the UPF0352 family.

The sequence is that of UPF0352 protein VSAL_I1058 from Aliivibrio salmonicida (strain LFI1238) (Vibrio salmonicida (strain LFI1238)).